The sequence spans 94 residues: DNA gyrase subunit A (94 aa).

Residues L35–A94 form the Topo IIA-type catalytic domain.

The protein belongs to the type II topoisomerase GyrA/ParC subunit family. Heterotetramer, composed of two GyrA and two GyrB chains. In the heterotetramer, GyrA contains the active site tyrosine that forms a transient covalent intermediate with DNA, while GyrB binds cofactors and catalyzes ATP hydrolysis.

It localises to the cytoplasm. The catalysed reaction is ATP-dependent breakage, passage and rejoining of double-stranded DNA.. A type II topoisomerase that negatively supercoils closed circular double-stranded (ds) DNA in an ATP-dependent manner to modulate DNA topology and maintain chromosomes in an underwound state. Negative supercoiling favors strand separation, and DNA replication, transcription, recombination and repair, all of which involve strand separation. Also able to catalyze the interconversion of other topological isomers of dsDNA rings, including catenanes and knotted rings. Type II topoisomerases break and join 2 DNA strands simultaneously in an ATP-dependent manner. The sequence is that of DNA gyrase subunit A from Staphylococcus epidermidis.